The primary structure comprises 479 residues: Cyclic AMP-responsive element-binding protein 3-like protein 3 (479 aa).

Residues 1 to 317 are Cytoplasmic-facing; that stretch reads MDGDIAAGKM…QSTSKPAHAG (317 aa). The disordered stretch occupies residues 67–144; the sequence is CILGPGDSDP…CPEPPRTQVQ (78 aa). Over residues 98-110 the composition is skewed to polar residues; sequence PQDTPPRSGTEPA. Positions 239–302 constitute a bZIP domain; that stretch reads VLKKIRRKIR…LSLLEQLKHL (64 aa). The interval 241 to 270 is basic motif; the sequence is KKIRRKIRNKQSAQESRKKKKEYIDGLENR. The leucine-zipper stretch occupies residues 281–302; the sequence is LQRKVLHLEKQNLSLLEQLKHL. Lys290 is covalently cross-linked (Glycyl lysine isopeptide (Lys-Gly) (interchain with G-Cter in ubiquitin)). Residues 318–338 traverse the membrane as a helical; Signal-anchor for type II membrane protein segment; the sequence is TCIAVLLLSFALIILPSISPF. Topologically, residues 339–479 are lumenal; sequence NSNKVDSPGD…RLVQDALGVL (141 aa). N-linked (GlcNAc...) asparagine glycans are attached at residues Asn411, Asn418, and Asn425.

The protein belongs to the bZIP family. ATF subfamily. Binds DNA as a dimer. May form homodimers. Interacts with ATF6. Interacts with SYNV1/HRD1; this interaction leads to CREB3L3 ubiquitination and proteasomal degradation. Following ER stress a fragment containing the cytoplasmic transcription factor domain is released by proteolysis. The cleavage seems to be performed sequentially by site-1 and site-2 proteases. In terms of processing, N-glycosylation is required for optimal proteolytic activation. Post-translationally, ubiquitinated at Lys-290 by SYNV1/HRD1 via 'Lys-27'-linked ubiquitin. In terms of tissue distribution, expressed in adult liver (at protein level) and small intestine.

The protein localises to the endoplasmic reticulum membrane. It localises to the nucleus. Its function is as follows. Transcription factor that may act during endoplasmic reticulum (ER) stress by activating unfolded protein response target genes. Activated in response to cAMP stimulation. Binds to the cAMP response element (CRE). Activates transcription through box-B element. Activates transcription through CRE. May function synergistically with ATF6. In acute inflammatory response, may activate expression of acute phase response (APR) genes. May be involved in growth suppression. Regulates FGF21 transcription. Plays a crucial role in the regulation of triglyceride metabolism and is required for the maintenance of normal plasma triglyceride concentrations. This chain is Cyclic AMP-responsive element-binding protein 3-like protein 3 (Creb3l3), found in Mus musculus (Mouse).